Here is a 342-residue protein sequence, read N- to C-terminus: Ferredoxin--NADP reductase (342 aa).

FAD-binding residues include Cys17, Asp36, Gln44, Tyr49, Ile89, Phe124, Asp289, and Thr330.

Belongs to the ferredoxin--NADP reductase type 2 family. As to quaternary structure, homodimer. The cofactor is FAD.

It catalyses the reaction 2 reduced [2Fe-2S]-[ferredoxin] + NADP(+) + H(+) = 2 oxidized [2Fe-2S]-[ferredoxin] + NADPH. The sequence is that of Ferredoxin--NADP reductase from Rhodopseudomonas palustris (strain BisB18).